The sequence spans 91 residues: Sec-independent protein translocase protein TatA (91 aa).

Residues 1-21 form a helical membrane-spanning segment; that stretch reads MGAMQPMHWLIVAVVVVILFG.

Belongs to the TatA/E family. As to quaternary structure, the Tat system comprises two distinct complexes: a TatABC complex, containing multiple copies of TatA, TatB and TatC subunits, and a separate TatA complex, containing only TatA subunits. Substrates initially bind to the TatABC complex, which probably triggers association of the separate TatA complex to form the active translocon.

It localises to the cell membrane. Part of the twin-arginine translocation (Tat) system that transports large folded proteins containing a characteristic twin-arginine motif in their signal peptide across membranes. TatA could form the protein-conducting channel of the Tat system. This chain is Sec-independent protein translocase protein TatA, found in Rhodococcus erythropolis (strain PR4 / NBRC 100887).